We begin with the raw amino-acid sequence, 331 residues long: Ketol-acid reductoisomerase (NADP(+)) (331 aa).

The 180-residue stretch at 2-181 (TKVYYEDAVK…GATRAGVIET (180 aa)) folds into the KARI N-terminal Rossmann domain. NADP(+)-binding positions include 25–28 (YGSQ), Arg48, Ser52, and 82–85 (DETQ). His107 is an active-site residue. Position 133 (Gly133) interacts with NADP(+). The KARI C-terminal knotted domain maps to 182 to 327 (TFKEETETDL…AELREMMPFV (146 aa)). The Mg(2+) site is built by Asp190, Glu194, Glu226, and Glu230. Ser251 lines the substrate pocket.

Belongs to the ketol-acid reductoisomerase family. Mg(2+) is required as a cofactor.

The enzyme catalyses (2R)-2,3-dihydroxy-3-methylbutanoate + NADP(+) = (2S)-2-acetolactate + NADPH + H(+). The catalysed reaction is (2R,3R)-2,3-dihydroxy-3-methylpentanoate + NADP(+) = (S)-2-ethyl-2-hydroxy-3-oxobutanoate + NADPH + H(+). Its pathway is amino-acid biosynthesis; L-isoleucine biosynthesis; L-isoleucine from 2-oxobutanoate: step 2/4. It participates in amino-acid biosynthesis; L-valine biosynthesis; L-valine from pyruvate: step 2/4. Its function is as follows. Involved in the biosynthesis of branched-chain amino acids (BCAA). Catalyzes an alkyl-migration followed by a ketol-acid reduction of (S)-2-acetolactate (S2AL) to yield (R)-2,3-dihydroxy-isovalerate. In the isomerase reaction, S2AL is rearranged via a Mg-dependent methyl migration to produce 3-hydroxy-3-methyl-2-ketobutyrate (HMKB). In the reductase reaction, this 2-ketoacid undergoes a metal-dependent reduction by NADPH to yield (R)-2,3-dihydroxy-isovalerate. The protein is Ketol-acid reductoisomerase (NADP(+)) of Listeria monocytogenes serovar 1/2a (strain ATCC BAA-679 / EGD-e).